A 273-amino-acid polypeptide reads, in one-letter code: Large ribosomal subunit protein uL2 (273 aa).

2 disordered regions span residues 30-50 (YAPLLDTKSKTGGRNNFGRIT) and 221-273 (RGTA…RRGK). A compositionally biased stretch (basic residues) spans 253–273 (KGKKTRHNKRTDKFIVRRRGK).

It belongs to the universal ribosomal protein uL2 family. In terms of assembly, part of the 50S ribosomal subunit. Forms a bridge to the 30S subunit in the 70S ribosome.

Its function is as follows. One of the primary rRNA binding proteins. Required for association of the 30S and 50S subunits to form the 70S ribosome, for tRNA binding and peptide bond formation. It has been suggested to have peptidyltransferase activity; this is somewhat controversial. Makes several contacts with the 16S rRNA in the 70S ribosome. The polypeptide is Large ribosomal subunit protein uL2 (Pasteurella multocida (strain Pm70)).